The primary structure comprises 444 residues: Trigger factor (444 aa).

Residues G166–A251 enclose the PPIase FKBP-type domain.

The protein belongs to the FKBP-type PPIase family. Tig subfamily.

The protein resides in the cytoplasm. The catalysed reaction is [protein]-peptidylproline (omega=180) = [protein]-peptidylproline (omega=0). Functionally, involved in protein export. Acts as a chaperone by maintaining the newly synthesized protein in an open conformation. Functions as a peptidyl-prolyl cis-trans isomerase. The sequence is that of Trigger factor from Cereibacter sphaeroides (strain ATCC 17025 / ATH 2.4.3) (Rhodobacter sphaeroides).